The chain runs to 133 residues: Large ribosomal subunit protein uL14 (133 aa).

The protein belongs to the universal ribosomal protein uL14 family. As to quaternary structure, part of the 50S ribosomal subunit. Forms a cluster with proteins L3 and L24e, part of which may contact the 16S rRNA in 2 intersubunit bridges.

Binds to 23S rRNA. Forms part of two intersubunit bridges in the 70S ribosome. The protein is Large ribosomal subunit protein uL14 of Methanopyrus kandleri (strain AV19 / DSM 6324 / JCM 9639 / NBRC 100938).